Here is a 301-residue protein sequence, read N- to C-terminus: HTH-type transcriptional regulator AbaB (301 aa).

Positions 1-58 (MDLALLRTFVTVHRAGSFTRAAALLGLSQPAVTSQIRTLERQLGRPLFLRQARGVTPT) constitute an HTH lysR-type domain. A DNA-binding region (H-T-H motif) is located at residues 18–37 (FTRAAALLGLSQPAVTSQIR).

This sequence belongs to the LysR transcriptional regulatory family.

In terms of biological role, putative regulator that may be involved in stimulating antibiotic production in S.antibioticus. This is HTH-type transcriptional regulator AbaB from Streptomyces antibioticus.